We begin with the raw amino-acid sequence, 56 residues long: Large ribosomal subunit protein bL32c (56 aa).

The protein belongs to the bacterial ribosomal protein bL32 family.

It localises to the plastid. It is found in the chloroplast. The chain is Large ribosomal subunit protein bL32c from Platanus occidentalis (Sycamore).